Reading from the N-terminus, the 354-residue chain is Methionine import ATP-binding protein MetN (354 aa).

The 243-residue stretch at 8-250 folds into the ABC transporter domain; that stretch reads LDHIDITFRQ…PKEALTQKFI (243 aa). 42–49 lines the ATP pocket; that stretch reads GYSGAGKS.

This sequence belongs to the ABC transporter superfamily. Methionine importer (TC 3.A.1.24) family. In terms of assembly, the complex is composed of two ATP-binding proteins (MetN), two transmembrane proteins (MetI) and a solute-binding protein (MetQ).

It is found in the cell membrane. It catalyses the reaction L-methionine(out) + ATP + H2O = L-methionine(in) + ADP + phosphate + H(+). The enzyme catalyses D-methionine(out) + ATP + H2O = D-methionine(in) + ADP + phosphate + H(+). In terms of biological role, part of the ABC transporter complex MetNIQ involved in methionine import. Responsible for energy coupling to the transport system. The protein is Methionine import ATP-binding protein MetN of Streptococcus pyogenes serotype M6 (strain ATCC BAA-946 / MGAS10394).